Here is a 226-residue protein sequence, read N- to C-terminus: Uridylate kinase (226 aa).

6 to 10 is a binding site for ATP; sequence KISGK. G43 is a UMP binding site. Residues G44 and R48 each coordinate ATP. UMP is bound by residues D65 and 113–119; that span reads FQPGQST. ATP contacts are provided by T139, N140, Y145, and D148.

It belongs to the UMP kinase family. Homohexamer.

Its subcellular location is the cytoplasm. It catalyses the reaction UMP + ATP = UDP + ADP. It participates in pyrimidine metabolism; CTP biosynthesis via de novo pathway; UDP from UMP (UMPK route): step 1/1. With respect to regulation, inhibited by UTP. Catalyzes the reversible phosphorylation of UMP to UDP. The polypeptide is Uridylate kinase (Saccharolobus islandicus (strain Y.N.15.51 / Yellowstone #2) (Sulfolobus islandicus)).